The primary structure comprises 411 residues: L-cysteine:1D-myo-inositol 2-amino-2-deoxy-alpha-D-glucopyranoside ligase (411 aa).

Cys-43 contributes to the Zn(2+) binding site. L-cysteinyl-5'-AMP contacts are provided by residues 43–46 (CGIT), Thr-58, and 81–83 (NVT). A 'HIGH' region motif is present at residues 45–55 (ITPYDATHLGH). The 'ERGGDP' region signature appears at 186-191 (QRGGDP). Residue Trp-226 participates in L-cysteinyl-5'-AMP binding. Residue Cys-230 participates in Zn(2+) binding. Residue 248 to 250 (GSD) participates in L-cysteinyl-5'-AMP binding. His-255 serves as a coordination point for Zn(2+). Ile-282 serves as a coordination point for L-cysteinyl-5'-AMP. A 'KMSKS' region motif is present at residues 288-292 (KMSKS).

It belongs to the class-I aminoacyl-tRNA synthetase family. MshC subfamily. Monomer. Requires Zn(2+) as cofactor.

The enzyme catalyses 1D-myo-inositol 2-amino-2-deoxy-alpha-D-glucopyranoside + L-cysteine + ATP = 1D-myo-inositol 2-(L-cysteinylamino)-2-deoxy-alpha-D-glucopyranoside + AMP + diphosphate + H(+). In terms of biological role, catalyzes the ATP-dependent condensation of GlcN-Ins and L-cysteine to form L-Cys-GlcN-Ins. This is L-cysteine:1D-myo-inositol 2-amino-2-deoxy-alpha-D-glucopyranoside ligase from Mycobacterium ulcerans (strain Agy99).